Here is a 507-residue protein sequence, read N- to C-terminus: Probable Xaa-Pro aminopeptidase ARB_01886 (507 aa).

Residues aspartate 275, aspartate 286, glutamate 434, and glutamate 478 each contribute to the Mn(2+) site.

Belongs to the peptidase M24B family. Mn(2+) serves as cofactor.

The enzyme catalyses Release of any N-terminal amino acid, including proline, that is linked to proline, even from a dipeptide or tripeptide.. In terms of biological role, catalyzes the removal of a penultimate prolyl residue from the N-termini of peptides. This is Probable Xaa-Pro aminopeptidase ARB_01886 from Arthroderma benhamiae (strain ATCC MYA-4681 / CBS 112371) (Trichophyton mentagrophytes).